Consider the following 286-residue polypeptide: Nucleotide-binding protein Sfum_2066 (286 aa).

8–15 serves as a coordination point for ATP; the sequence is GLSGSGKS. 59–62 serves as a coordination point for GTP; sequence DIRE.

The protein belongs to the RapZ-like family.

In terms of biological role, displays ATPase and GTPase activities. This Syntrophobacter fumaroxidans (strain DSM 10017 / MPOB) protein is Nucleotide-binding protein Sfum_2066.